The primary structure comprises 303 residues: Acetyl-coenzyme A carboxylase carboxyl transferase subunit beta (303 aa).

Positions 29–298 constitute a CoA carboxyltransferase N-terminal domain; it reads LWVKCPETGQ…ATPAPASAAA (270 aa).

This sequence belongs to the AccD/PCCB family. In terms of assembly, acetyl-CoA carboxylase is a heterohexamer composed of biotin carboxyl carrier protein (AccB), biotin carboxylase (AccC) and two subunits each of ACCase subunit alpha (AccA) and ACCase subunit beta (AccD).

The protein localises to the cytoplasm. It carries out the reaction N(6)-carboxybiotinyl-L-lysyl-[protein] + acetyl-CoA = N(6)-biotinyl-L-lysyl-[protein] + malonyl-CoA. It participates in lipid metabolism; malonyl-CoA biosynthesis; malonyl-CoA from acetyl-CoA: step 1/1. Functionally, component of the acetyl coenzyme A carboxylase (ACC) complex. Biotin carboxylase (BC) catalyzes the carboxylation of biotin on its carrier protein (BCCP) and then the CO(2) group is transferred by the transcarboxylase to acetyl-CoA to form malonyl-CoA. The protein is Acetyl-coenzyme A carboxylase carboxyl transferase subunit beta of Methylobacterium sp. (strain 4-46).